The primary structure comprises 501 residues: Dipeptide and tripeptide permease A (501 aa).

Topologically, residues 1–21 are cytoplasmic; that stretch reads MSTANKKPTESVSLNAFKQPK. A helical transmembrane segment spans residues 22–44; it reads AFYLIFSIELWERFGYYGLQGIM. The Periplasmic portion of the chain corresponds to 45-59; it reads AVYLVKQLGMSEADS. The chain crosses the membrane as a helical span at residues 60–80; that stretch reads ITLFSSFSALVYGLVAIGGWL. The Cytoplasmic portion of the chain corresponds to 81–89; sequence GDKILGTKR. The helical transmembrane segment at 90–110 threads the bilayer; the sequence is VIMLGAVVLAIGYALVAWSGH. D111 is a topological domain (periplasmic). A helical transmembrane segment spans residues 112 to 132; the sequence is AGIVYMGMAAIAVGNGLFKAN. Residues 133–153 lie on the Cytoplasmic side of the membrane; that stretch reads PSSLLSTCYAKDDPRLDGAFT. Residues 154–174 form a helical membrane-spanning segment; sequence MYYMSVNIGSFFSMLATPWLA. Residues 175-178 are Periplasmic-facing; sequence ARYG. The chain crosses the membrane as a helical span at residues 179–199; the sequence is WSTAFALSVVGMLITVVNFAF. Topologically, residues 200–219 are cytoplasmic; that stretch reads CQRWVKSYGSKPDFEPINFR. The chain crosses the membrane as a helical span at residues 220–240; that stretch reads NLLLTIVGIVVLIAVATWLLH. Topologically, residues 241–246 are periplasmic; sequence NQDIAR. Residues 247–267 traverse the membrane as a helical segment; sequence MVLGVIALGIVIIFGKEAFSM. Residues 268-274 lie on the Cytoplasmic side of the membrane; the sequence is HGAARRK. Residues 275-295 traverse the membrane as a helical segment; the sequence is MIVAFILMLQAIIFFVLYSQM. The Periplasmic segment spans residues 296 to 320; sequence PTSLNFFAIRNVEHSILGIAFEPEQ. The helical transmembrane segment at 321-341 threads the bilayer; the sequence is YQALNPFWIIIGSPILAAIYN. Topologically, residues 342 to 352 are cytoplasmic; it reads RMGDTLPMPMK. The helical transmembrane segment at 353–373 threads the bilayer; it reads FAIGMVLCSGAFLILPLGAKF. Over 374 to 383 the chain is Periplasmic; that stretch reads ANDAGIVSVN. The chain crosses the membrane as a helical span at residues 384 to 404; sequence WLIASYGLQSIGELMISGLGL. Over 405–414 the chain is Cytoplasmic; the sequence is AMVAQLVPQR. A helical transmembrane segment spans residues 415–435; it reads LMGFIMGSWFLTTAGANIIGG. Over 436–459 the chain is Periplasmic; it reads YVANLMAVPSDVTDPLMSLEVYGR. Residues 460–480 traverse the membrane as a helical segment; it reads VFMQIGIATAVIAVLMLLTAP. Residues 481-501 lie on the Cytoplasmic side of the membrane; sequence KLNRMTQDDDTAEKGSKAATV.

It belongs to the major facilitator superfamily. Proton-dependent oligopeptide transporter (POT/PTR) (TC 2.A.17) family. DtpA subfamily.

It localises to the cell inner membrane. In terms of biological role, proton-dependent permease that transports di- and tripeptides. This is Dipeptide and tripeptide permease A from Salmonella typhimurium (strain LT2 / SGSC1412 / ATCC 700720).